Reading from the N-terminus, the 600-residue chain is Chaperone protein DnaK (600 aa).

A Phosphothreonine; by autocatalysis modification is found at threonine 175. The segment at phenylalanine 572 to lysine 600 is disordered. Residues alanine 591–lysine 600 show a composition bias toward polar residues.

Belongs to the heat shock protein 70 family.

Acts as a chaperone. This chain is Chaperone protein DnaK, found in Ureaplasma urealyticum serovar 10 (strain ATCC 33699 / Western).